The sequence spans 867 residues: Ent-copalyl diphosphate synthase 1, chloroplastic (867 aa).

Residues 1-35 constitute a chloroplast transit peptide; the sequence is MIHLHSPPTAPAAFGGAGSADWRRRRRWSWSSSSR. Residues 1-134 are disordered; sequence MIHLHSPPTA…ADEEADDELQ (134 aa). The span at 51-64 shows a compositional bias: basic and acidic residues; that stretch reads RGGDDGGGEDHHAD. The span at 74-89 shows a compositional bias: low complexity; it reads AWRARATTAGVSSSSS. A compositionally biased stretch (basic and acidic residues) spans 99 to 121; that stretch reads IEHETPRITKWPNESRDLDDHQQ. The segment covering 124 to 133 has biased composition (acidic residues); that stretch reads EADEEADDEL. Lys-286 is a substrate binding site. Residues 418-421 carry the DXDD motif motif; that stretch reads EVDD. Lys-504 serves as a coordination point for substrate.

This sequence belongs to the terpene synthase family. It depends on Mg(2+) as a cofactor.

It is found in the plastid. It localises to the chloroplast. The catalysed reaction is (2E,6E,10E)-geranylgeranyl diphosphate = ent-copalyl diphosphate. It functions in the pathway plant hormone biosynthesis; gibberellin biosynthesis. Functionally, catalyzes the conversion of geranylgeranyl diphosphate to the gibberellin precursor ent-copalyl diphosphate. This is Ent-copalyl diphosphate synthase 1, chloroplastic (CPS1) from Oryza sativa subsp. japonica (Rice).